Here is a 426-residue protein sequence, read N- to C-terminus: Serine hydroxymethyltransferase 1 (426 aa).

Residues Leu-118 and 122-124 (GHL) each bind (6S)-5,6,7,8-tetrahydrofolate. Lys-227 carries the N6-(pyridoxal phosphate)lysine modification.

The protein belongs to the SHMT family. In terms of assembly, homodimer. Requires pyridoxal 5'-phosphate as cofactor.

It is found in the cytoplasm. It carries out the reaction (6R)-5,10-methylene-5,6,7,8-tetrahydrofolate + glycine + H2O = (6S)-5,6,7,8-tetrahydrofolate + L-serine. It functions in the pathway one-carbon metabolism; tetrahydrofolate interconversion. The protein operates within amino-acid biosynthesis; glycine biosynthesis; glycine from L-serine: step 1/1. Functionally, catalyzes the reversible interconversion of serine and glycine with tetrahydrofolate (THF) serving as the one-carbon carrier. This reaction serves as the major source of one-carbon groups required for the biosynthesis of purines, thymidylate, methionine, and other important biomolecules. Also exhibits THF-independent aldolase activity toward beta-hydroxyamino acids, producing glycine and aldehydes, via a retro-aldol mechanism. The sequence is that of Serine hydroxymethyltransferase 1 from Mycobacterium bovis (strain ATCC BAA-935 / AF2122/97).